The primary structure comprises 543 residues: Chaperonin GroEL 2 (543 aa).

ATP-binding positions include 29–32 (TLGP), 86–90 (DGTTT), G413, 479–481 (NAA), and D495.

The protein belongs to the chaperonin (HSP60) family. In terms of assembly, forms a cylinder of 14 subunits composed of two heptameric rings stacked back-to-back. Interacts with the co-chaperonin GroES.

Its subcellular location is the cytoplasm. The catalysed reaction is ATP + H2O + a folded polypeptide = ADP + phosphate + an unfolded polypeptide.. In terms of biological role, together with its co-chaperonin GroES, plays an essential role in assisting protein folding. The GroEL-GroES system forms a nano-cage that allows encapsulation of the non-native substrate proteins and provides a physical environment optimized to promote and accelerate protein folding. In Synechococcus sp. (strain CC9311), this protein is Chaperonin GroEL 2.